The primary structure comprises 118 residues: Late cornified envelope protein 5A (118 aa).

Low complexity predominate over residues 1-10; the sequence is MSCQQSQQQC. Disordered stretches follow at residues 1 to 32 and 72 to 118; these read MSCQ…PPKC and HRPR…GGCC. The span at 11 to 32 shows a compositional bias: pro residues; the sequence is QPPPKCTPKCPPKCTPKCPPKC. Basic residues predominate over residues 72-82; it reads HRPRQSLRRRP. The segment covering 97–118 has biased composition (low complexity); that stretch reads GGSSCCHSSGGSGCCHSSGGCC.

It belongs to the LCE family. As to quaternary structure, interacts with CYSRT1; the interaction is direct. As to expression, skin-specific. Expression was readily detected in adult trunk skin, adult arm skin, fetal skin, penal skin, vulva, esophagus and tongue. Not expressed in the cervix, rectum, lung, colon, or placenta. Expression is observed in the heart.

In terms of biological role, precursors of the cornified envelope of the stratum corneum. The sequence is that of Late cornified envelope protein 5A (LCE5A) from Homo sapiens (Human).